Consider the following 409-residue polypeptide: NADH-quinone oxidoreductase subunit D (409 aa).

It belongs to the complex I 49 kDa subunit family. In terms of assembly, NDH-1 is composed of 14 different subunits. Subunits NuoB, C, D, E, F, and G constitute the peripheral sector of the complex.

It localises to the cell inner membrane. The enzyme catalyses a quinone + NADH + 5 H(+)(in) = a quinol + NAD(+) + 4 H(+)(out). NDH-1 shuttles electrons from NADH, via FMN and iron-sulfur (Fe-S) centers, to quinones in the respiratory chain. The immediate electron acceptor for the enzyme in this species is believed to be ubiquinone. Couples the redox reaction to proton translocation (for every two electrons transferred, four hydrogen ions are translocated across the cytoplasmic membrane), and thus conserves the redox energy in a proton gradient. This is NADH-quinone oxidoreductase subunit D from Campylobacter concisus (strain 13826).